The sequence spans 418 residues: Chromo domain-containing protein rhino (418 aa).

The 51-residue stretch at 24–74 folds into the Chromo domain; the sequence is YVVEKILGKRFVNGRPQVLVKWSGFPNENNTWEPLENVGNCMKLVSDFESE. Composition is skewed to low complexity over residues 84-99 and 107-120; these read AKSV…SSGP and SSSK…KSVQ. Disordered regions lie at residues 84-167 and 199-337; these read AKSV…TDST and PTKD…RCPR. Basic residues predominate over residues 131-143; that stretch reads NQKKGKNIKKTAG. Over residues 152-167 the composition is skewed to polar residues; that stretch reads PKTQMPSTSQVSTDST. The span at 218–228 shows a compositional bias: basic and acidic residues; that stretch reads RLIEFPQREDA. Low complexity predominate over residues 258–275; the sequence is GESSSSMSLPTVSSTSSE. Residues 276–285 show a composition bias toward basic and acidic residues; sequence KSIKVTKSEP. A required for interaction with del/deadlock region spans residues 353-418; the sequence is TKPFGVNRGL…FESLRIIVPK (66 aa).

As to quaternary structure, homodimer in solution. Dimerization is essential for chromatin binding. Component of the Rhino-Deadlock-Cutoff (RDC) complex, composed of rhi/rhino, del/deadlock and cuff/cutoff. Interacts (via C-terminus) with del/deadlock (via N-terminus); this interaction is direct. Two copies of del/deadlock associate with each rhi/rhino dimer. Interacts with cuff/cutoff; this interaction is indirect and is mediated by del/deadlock. Interacts (via Chromo domain) with kipf/kipferl (via C2H2 type zinc finger 4). Interacts (via Chromo domain) with His3/histone H3 (via N-terminus di- or tri-methylated on 'Lys-10' (H3K9me2/3)); this interaction is direct. Two His3 N-terminal tails oriented anti-parallel to each other are required for dimer binding to His3. In terms of tissue distribution, female specific, expressed in both somatic and germline cells but highly enriched in ovaries. In the germarium of the developing oocyte expressed in germline stem cells, cystoblasts and developing germline cysts. Expressed in nurse cells in the germarium and egg chamber.

The protein resides in the nucleus. It is found in the chromosome. Involved in piRNA (piwi-interacting RNA)-mediated transposon repression. May be involved in formation of the perinuclear nuage, a subcellular structure implicated in RNA processing that may be involved in transposon RNA surveillance and silencing. Required for ping-pong amplification during piRNA biogenesis, probably by promoting transcription of piRNA precursors. As part of the Rhino-Deadlock-Cutoff (RDC) Complex associates with, and drives non-canonical transcription of germline specific dual-strand piRNA clusters 80F, 38C and 42AB, but not single-stranded piRNA cluster 20A. Induction of piRNA expression is potentially achieved through a mechanism that prevents transcriptional termination and leads to readthrough from flanking transcription units. Recruited to specific chromatin regions by a combination of H3K9me2/3 histone methylation and differentially expressed sequence-specific recruitment factors. This association may involve direct interaction with DNA. Associates with chromatin upon exposure to homologous piRNA and facilitates transcriptional read-through. As part of the RDC complex, involved in suppression of splicing. In ovaries, recruitment to specific heterochromatin clusters is nucleated and stabilized by kipf/kipferl. During oogenesis, involved in axis specification and may regulate chromosome condensation at the onset of a mitotic-like phase that occurs during nurse cell chromosome duplication. Involved in the distribution of mRNAs for proteins that play a role in anterior-posterior and dorsal-ventral axes specification during development of the oocyte, including grk/gurken, osk/oskar and vas/vasa. Mitigates meiotic double strand breaks and interacts with DNA damage signaling to mediate axis specification. The chain is Chromo domain-containing protein rhino from Drosophila melanogaster (Fruit fly).